The chain runs to 422 residues: UDP-N-acetylmuramoylalanine--D-glutamate ligase (422 aa).

102 to 108 serves as a coordination point for ATP; it reads GTNGKTT.

It belongs to the MurCDEF family.

It localises to the cytoplasm. It carries out the reaction UDP-N-acetyl-alpha-D-muramoyl-L-alanine + D-glutamate + ATP = UDP-N-acetyl-alpha-D-muramoyl-L-alanyl-D-glutamate + ADP + phosphate + H(+). It functions in the pathway cell wall biogenesis; peptidoglycan biosynthesis. Its function is as follows. Cell wall formation. Catalyzes the addition of glutamate to the nucleotide precursor UDP-N-acetylmuramoyl-L-alanine (UMA). The polypeptide is UDP-N-acetylmuramoylalanine--D-glutamate ligase (Helicobacter pylori (strain HPAG1)).